Consider the following 185-residue polypeptide: Ribosome-recycling factor (185 aa).

Belongs to the RRF family.

It localises to the cytoplasm. Functionally, responsible for the release of ribosomes from messenger RNA at the termination of protein biosynthesis. May increase the efficiency of translation by recycling ribosomes from one round of translation to another. The sequence is that of Ribosome-recycling factor from Pasteurella multocida (strain Pm70).